The sequence spans 716 residues: DNA ligase (716 aa).

Residues 49-53, 98-99, and glutamate 131 each bind NAD(+); these read DAEYD and SL. Residue lysine 133 is the N6-AMP-lysine intermediate of the active site. NAD(+) contacts are provided by arginine 154, glutamate 191, lysine 308, and lysine 332. Zn(2+) contacts are provided by cysteine 437, cysteine 439, cysteine 461, and cysteine 467. Positions 638 to 716 constitute a BRCT domain; sequence KRHSPIATKT…EDEWLQLIAE (79 aa).

It belongs to the NAD-dependent DNA ligase family. LigA subfamily. Requires Mg(2+) as cofactor. Mn(2+) serves as cofactor.

It catalyses the reaction NAD(+) + (deoxyribonucleotide)n-3'-hydroxyl + 5'-phospho-(deoxyribonucleotide)m = (deoxyribonucleotide)n+m + AMP + beta-nicotinamide D-nucleotide.. Its function is as follows. DNA ligase that catalyzes the formation of phosphodiester linkages between 5'-phosphoryl and 3'-hydroxyl groups in double-stranded DNA using NAD as a coenzyme and as the energy source for the reaction. It is essential for DNA replication and repair of damaged DNA. The polypeptide is DNA ligase (Bradyrhizobium sp. (strain BTAi1 / ATCC BAA-1182)).